The chain runs to 397 residues: Elongation factor Tu (397 aa).

A tr-type G domain is found at 10-207 (KPHVNIGTIG…VLDEYVKEPV (198 aa)). The segment at 19–26 (GHIDHGKT) is G1. 19–26 (GHIDHGKT) is a GTP binding site. T26 lines the Mg(2+) pocket. Residues 60–64 (GITIS) form a G2 region. The tract at residues 81 to 84 (DCPG) is G3. GTP contacts are provided by residues 81-85 (DCPGH) and 136-139 (NKCD). Positions 136–139 (NKCD) are G4. A G5 region spans residues 174–176 (SAL).

The protein belongs to the TRAFAC class translation factor GTPase superfamily. Classic translation factor GTPase family. EF-Tu/EF-1A subfamily. In terms of assembly, monomer.

Its subcellular location is the cytoplasm. It carries out the reaction GTP + H2O = GDP + phosphate + H(+). Functionally, GTP hydrolase that promotes the GTP-dependent binding of aminoacyl-tRNA to the A-site of ribosomes during protein biosynthesis. The protein is Elongation factor Tu of Desulforapulum autotrophicum (strain ATCC 43914 / DSM 3382 / VKM B-1955 / HRM2) (Desulfobacterium autotrophicum).